Reading from the N-terminus, the 501-residue chain is ADP,ATP carrier protein 3 (501 aa).

12 consecutive transmembrane segments (helical) span residues 23–43 (LKLF…FGAL), 59–79 (IISF…TVLY), 90–110 (YIFY…AYII), 146–166 (YALM…LMFW), 183–203 (PVLG…LVFF), 227–247 (IMLQ…MLLF), 293–313 (IALL…PWKA), 326–346 (VNFM…FMII), 361–381 (LLTP…IIFI), 387–407 (CFGD…QNIL), 446–466 (FGKS…PTAT), and 470–490 (IIIY…WNVI).

It belongs to the ADP/ATP translocase tlc family.

Its subcellular location is the cell membrane. Provides the rickettsial cell with host ATP in exchange for rickettsial ADP. This is an obligate exchange system. This energy acquiring activity is an important component of rickettsial parasitism. In Rickettsia conorii (strain ATCC VR-613 / Malish 7), this protein is ADP,ATP carrier protein 3 (tlcC).